A 401-amino-acid chain; its full sequence is Argininosuccinate synthase (401 aa).

9 to 17 (AYSGGLDTS) is a binding site for ATP. Tyrosine 88 is an L-citrulline binding site. An ATP-binding site is contributed by glycine 118. L-aspartate is bound by residues threonine 120, asparagine 124, and aspartate 125. Residue asparagine 124 participates in L-citrulline binding. Residues arginine 128, serine 176, serine 185, glutamate 261, and tyrosine 273 each coordinate L-citrulline.

This sequence belongs to the argininosuccinate synthase family. Type 1 subfamily. As to quaternary structure, homotetramer.

It is found in the cytoplasm. It catalyses the reaction L-citrulline + L-aspartate + ATP = 2-(N(omega)-L-arginino)succinate + AMP + diphosphate + H(+). The protein operates within amino-acid biosynthesis; L-arginine biosynthesis; L-arginine from L-ornithine and carbamoyl phosphate: step 2/3. In Symbiobacterium thermophilum (strain DSM 24528 / JCM 14929 / IAM 14863 / T), this protein is Argininosuccinate synthase.